The chain runs to 411 residues: CCA-adding enzyme (411 aa).

The ATP site is built by glycine 8 and arginine 11. Positions 8 and 11 each coordinate CTP. The Mg(2+) site is built by glutamate 21 and aspartate 23. ATP contacts are provided by arginine 91, arginine 137, and arginine 140. CTP-binding residues include arginine 91, arginine 137, and arginine 140. The 102-residue stretch at 227–328 folds into the HD domain; the sequence is LGNQTMTRLS…MTIFQAFDCW (102 aa).

The protein belongs to the tRNA nucleotidyltransferase/poly(A) polymerase family. Bacterial CCA-adding enzyme type 2 subfamily. Requires Mg(2+) as cofactor.

The enzyme catalyses a tRNA precursor + 2 CTP + ATP = a tRNA with a 3' CCA end + 3 diphosphate. It catalyses the reaction a tRNA with a 3' CCA end + 2 CTP + ATP = a tRNA with a 3' CCACCA end + 3 diphosphate. Its function is as follows. Catalyzes the addition and repair of the essential 3'-terminal CCA sequence in tRNAs without using a nucleic acid template. Adds these three nucleotides in the order of C, C, and A to the tRNA nucleotide-73, using CTP and ATP as substrates and producing inorganic pyrophosphate. tRNA 3'-terminal CCA addition is required both for tRNA processing and repair. Also involved in tRNA surveillance by mediating tandem CCA addition to generate a CCACCA at the 3' terminus of unstable tRNAs. While stable tRNAs receive only 3'-terminal CCA, unstable tRNAs are marked with CCACCA and rapidly degraded. The sequence is that of CCA-adding enzyme from Blochmanniella floridana.